Reading from the N-terminus, the 274-residue chain is Large ribosomal subunit protein uL2 (274 aa).

The segment at 222–257 is disordered; that stretch reads GVAMNPVDHPHGGGEGRTSGGRHPVSPWGVPTKGYK.

The protein belongs to the universal ribosomal protein uL2 family. As to quaternary structure, part of the 50S ribosomal subunit. Forms a bridge to the 30S subunit in the 70S ribosome.

Functionally, one of the primary rRNA binding proteins. Required for association of the 30S and 50S subunits to form the 70S ribosome, for tRNA binding and peptide bond formation. It has been suggested to have peptidyltransferase activity; this is somewhat controversial. Makes several contacts with the 16S rRNA in the 70S ribosome. This Nitrosococcus oceani (strain ATCC 19707 / BCRC 17464 / JCM 30415 / NCIMB 11848 / C-107) protein is Large ribosomal subunit protein uL2.